The following is a 351-amino-acid chain: Autophagy protein 5 (351 aa).

The tract at residues 106 to 143 is disordered; that stretch reads KSLSSPGSEREHYVRGGTRENISESGAEGEKDDNHGHD. Residues 113–143 show a composition bias toward basic and acidic residues; that stretch reads SEREHYVRGGTRENISESGAEGEKDDNHGHD. Residue Lys186 forms a Glycyl lysine isopeptide (Lys-Gly) (interchain with G-Cter in ATG12) linkage.

It belongs to the ATG5 family. As to quaternary structure, conjugated with ATG12. Conjugated to ATG12; which is essential for autophagy.

It is found in the preautophagosomal structure membrane. Involved in cytoplasm to vacuole transport (Cvt) and autophagic vesicle formation. Autophagy is essential for maintenance of amino acid levels and protein synthesis under nitrogen starvation. Required for selective autophagic degradation of the nucleus (nucleophagy). Also required for mitophagy, which eliminates defective or superfluous mitochondria in order to fulfill cellular energy requirements and prevent excess ROS production. Conjugation with ATG12, through a ubiquitin-like conjugating system involving ATG7 as an E1-like activating enzyme and ATG10 as an E2-like conjugating enzyme, is essential for its function. The ATG12-ATG5 conjugate acts as an E3-like enzyme which is required for lipidation of ATG8 and ATG8 association to the vesicle membranes. The polypeptide is Autophagy protein 5 (ATG5) (Coccidioides immitis (strain RS) (Valley fever fungus)).